Here is a 47-residue protein sequence, read N- to C-terminus: Photosystem II reaction center protein K (47 aa).

Positions Met-1 to Ala-10 are excised as a propeptide. A helical membrane pass occupies residues Leu-22–Ala-42.

Belongs to the PsbK family. PSII is composed of 1 copy each of membrane proteins PsbA, PsbB, PsbC, PsbD, PsbE, PsbF, PsbH, PsbI, PsbJ, PsbK, PsbL, PsbM, PsbT, PsbX, PsbY, PsbZ, Psb30/Ycf12, at least 3 peripheral proteins of the oxygen-evolving complex and a large number of cofactors. It forms dimeric complexes.

It localises to the plastid. It is found in the chloroplast thylakoid membrane. Its function is as follows. One of the components of the core complex of photosystem II (PSII). PSII is a light-driven water:plastoquinone oxidoreductase that uses light energy to abstract electrons from H(2)O, generating O(2) and a proton gradient subsequently used for ATP formation. It consists of a core antenna complex that captures photons, and an electron transfer chain that converts photonic excitation into a charge separation. The protein is Photosystem II reaction center protein K of Mesostigma viride (Green alga).